Reading from the N-terminus, the 84-residue chain is U4-theraphotoxin-Hhn1a (84 aa).

A signal peptide spans 1–22 (MKVTLIAILTCAAVLVLHTTAA). Residues 23–47 (EELEESQLMEVGMPDTELAAVDGER) constitute a propeptide that is removed on maturation. 3 disulfides stabilise this stretch: cysteine 51–cysteine 65, cysteine 55–cysteine 76, and cysteine 70–cysteine 81.

It belongs to the neurotoxin 12 (Hwtx-2) family. 02 (Hwtx-2) subfamily. In terms of tissue distribution, expressed by the venom gland.

The protein localises to the secreted. Its function is as follows. Postsynaptic neurotoxin. This is U4-theraphotoxin-Hhn1a from Cyriopagopus hainanus (Chinese bird spider).